The primary structure comprises 295 residues: Protoheme IX farnesyltransferase (295 aa).

Helical transmembrane passes span V8 to A28, Y35 to F55, V74 to I94, L98 to I118, V132 to A152, L162 to F182, I208 to A228, L233 to A253, and F264 to V284.

Belongs to the UbiA prenyltransferase family. Protoheme IX farnesyltransferase subfamily.

It localises to the cell inner membrane. It carries out the reaction heme b + (2E,6E)-farnesyl diphosphate + H2O = Fe(II)-heme o + diphosphate. The protein operates within porphyrin-containing compound metabolism; heme O biosynthesis; heme O from protoheme: step 1/1. Its function is as follows. Converts heme B (protoheme IX) to heme O by substitution of the vinyl group on carbon 2 of heme B porphyrin ring with a hydroxyethyl farnesyl side group. This chain is Protoheme IX farnesyltransferase, found in Yersinia pseudotuberculosis serotype O:1b (strain IP 31758).